The primary structure comprises 601 residues: Potassium-transporting ATPase potassium-binding subunit (601 aa).

12 helical membrane passes run alanine 3 to leucine 23, histidine 62 to glutamine 82, leucine 132 to leucine 152, alanine 179 to isoleucine 199, leucine 283 to phenylalanine 303, valine 314 to alanine 334, phenylalanine 367 to valine 387, leucine 397 to glycine 417, glycine 419 to glycine 439, valine 459 to proline 479, valine 523 to isoleucine 543, and glycine 564 to valine 584.

It belongs to the KdpA family. The system is composed of three essential subunits: KdpA, KdpB and KdpC.

Its subcellular location is the cell inner membrane. Functionally, part of the high-affinity ATP-driven potassium transport (or Kdp) system, which catalyzes the hydrolysis of ATP coupled with the electrogenic transport of potassium into the cytoplasm. This subunit binds the periplasmic potassium ions and delivers the ions to the membrane domain of KdpB through an intramembrane tunnel. The polypeptide is Potassium-transporting ATPase potassium-binding subunit (Paracidovorax citrulli (strain AAC00-1) (Acidovorax citrulli)).